We begin with the raw amino-acid sequence, 608 residues long: Signal transduction histidine-protein kinase AtoS (608 aa).

Residues 1–15 (MHYMKWIYPRRLRNQ) lie on the Cytoplasmic side of the membrane. A helical transmembrane segment spans residues 16–36 (MILMAILMVIVPTLTIGYIVE). Residues 37–189 (TEGRSAVLSE…DIRRQAWKMD (153 aa)) lie on the Periplasmic side of the membrane. A helical membrane pass occupies residues 190–210 (VRIIIVLTAGLLISLLLIVLF). At 211-608 (SRRLSANIDI…PINPQGNQTV (398 aa)) the chain is on the cytoplasmic side. An HAMP domain is found at 212–262 (RRLSANIDIITDGLSTLAQNIPTRLPQLPGEMGQISQSVNNLAQALRETRT). Residues 260–305 (TRTLNDLIIENAADGVIAIDRQGDVTTMNPAAEVITGYQRHELVGQ) form the PAS domain. One can recognise a PAC domain in the interval 326-382 (HGTEHVALEISFPGRDRTIELSVTTSRIHNTHGEMIGALVIFSDLTARKETQRRMAQ). Positions 395–602 (GVAHEVRNPL…TFTLILPINP (208 aa)) constitute a Histidine kinase domain. Residue His398 is modified to Phosphohistidine; by autocatalysis.

In terms of assembly, homodimer. Post-translationally, autophosphorylated. Each AtoS molecule may phosphorylate its partner within the dimer rather than phosphorylating itself.

The protein localises to the cell inner membrane. The catalysed reaction is ATP + protein L-histidine = ADP + protein N-phospho-L-histidine.. Functionally, member of the two-component regulatory system AtoS/AtoC. In the presence of acetoacetate, AtoS/AtoC stimulates the expression of the atoDAEB operon, leading to short chain fatty acid catabolism and activation of the poly-(R)-3-hydroxybutyrate (cPHB) biosynthetic pathway. Also induces the operon in response to spermidine. Involved in the regulation of motility and chemotaxis, via transcriptional induction of the flagellar regulon. AtoS is a membrane-associated kinase that phosphorylates and activates AtoC in response to environmental signals. This Escherichia coli (strain K12) protein is Signal transduction histidine-protein kinase AtoS (atoS).